We begin with the raw amino-acid sequence, 179 residues long: Acireductone dioxygenase (179 aa).

Over residues 1 to 12 (MVEAWYMDDSEE) the composition is skewed to acidic residues. The segment at 1 to 21 (MVEAWYMDDSEEDQRRPHRLE) is disordered. Residues H88, H90, E94, and H133 each coordinate Fe(2+). Residues H88, H90, E94, and H133 each contribute to the Ni(2+) site.

It belongs to the acireductone dioxygenase (ARD) family. Monomer. Interacts with MMP14. Requires Fe(2+) as cofactor. Ni(2+) serves as cofactor.

It localises to the cytoplasm. Its subcellular location is the nucleus. The protein localises to the cell membrane. It carries out the reaction 1,2-dihydroxy-5-(methylsulfanyl)pent-1-en-3-one + O2 = 4-methylsulfanyl-2-oxobutanoate + formate + 2 H(+). It catalyses the reaction 1,2-dihydroxy-5-(methylsulfanyl)pent-1-en-3-one + O2 = 3-(methylsulfanyl)propanoate + CO + formate + 2 H(+). It participates in amino-acid biosynthesis; L-methionine biosynthesis via salvage pathway; L-methionine from S-methyl-5-thio-alpha-D-ribose 1-phosphate: step 5/6. Functionally, catalyzes 2 different reactions between oxygen and the acireductone 1,2-dihydroxy-3-keto-5-methylthiopentene (DHK-MTPene) depending upon the metal bound in the active site. Fe-containing acireductone dioxygenase (Fe-ARD) produces formate and 2-keto-4-methylthiobutyrate (KMTB), the alpha-ketoacid precursor of methionine in the methionine recycle pathway. Ni-containing acireductone dioxygenase (Ni-ARD) produces methylthiopropionate, carbon monoxide and formate, and does not lie on the methionine recycle pathway. Also down-regulates cell migration mediated by MMP14. The polypeptide is Acireductone dioxygenase (Monodelphis domestica (Gray short-tailed opossum)).